The following is a 123-amino-acid chain: NHL-repeat-containing protein 4 (123 aa).

NHL repeat units follow at residues Gln-35–Ala-78 and Gly-79–Leu-119.

The chain is NHL-repeat-containing protein 4 (NHLRC4) from Homo sapiens (Human).